The chain runs to 318 residues: uncharacterized protein (318 aa).

Belongs to the glycosyltransferase 2 family.

This is an uncharacterized protein from Rickettsia typhi (strain ATCC VR-144 / Wilmington).